A 389-amino-acid chain; its full sequence is Large envelope protein (389 aa).

N-acetylmethionine is present on Met-1. Gly-2 carries the N-myristoyl glycine; by host lipid modification. The pre-S1 stretch occupies residues 2 to 108 (GQNLSTSNPL…PPLRDTHPQA (107 aa)). A pre-S region spans residues 2–163 (GQNLSTSNPL…FSRTGDPAPN (162 aa)). The Virion surface; in external conformation portion of the chain corresponds to 2-170 (GQNLSTSNPL…APNMESITSG (169 aa)). Topologically, residues 2-242 (GQNLSTSNPL…PGYRWMCLRR (241 aa)) are intravirion; in internal conformation. The segment at 73–99 (IITTVPANPPPASTNRQSGRKPTPISP) is disordered. The interval 109–163 (MHWNSTTFHQALQDPRVRGLYFPAGGSSSGTAYPVPDTASHISSIFSRTGDPAPN) is pre-S2. Residues 171–191 (FLGPLLVLQAGFFLLTKILTI) traverse the membrane as a helical segment. Residues 192–242 (PQSLDSWWTSLNFLGGAPVCLGQNSQSPTSNHSPTSCPPICPGYRWMCLRR) lie on the Intravirion; in external conformation side of the membrane. The chain crosses the membrane as a helical span at residues 243 to 263 (FIIFLFILLLCLIFLLVLLDY). At 264–337 (QGMLPVCPLI…WASVRFSWLS (74 aa)) the chain is on the virion surface side. N-linked (GlcNAc...) asparagine; by host glycosylation occurs at Asn-309. Residues 338–358 (LLAPFVQWFAGLSPTVWLSVI) traverse the membrane as a helical segment. The Intravirion segment spans residues 359–364 (WMMWYW). The helical transmembrane segment at 365–387 (GPNLYNILSPFIPLLPIFFCLWV) threads the bilayer. Over 388-389 (YI) the chain is Virion surface.

It belongs to the orthohepadnavirus major surface antigen family. In terms of assembly, in its internal form (Li-HBsAg), interacts with the capsid protein and with the isoform S. Interacts with host chaperone CANX. Associates with host chaperone CANX through its pre-S2 N glycan; this association may be essential for isoform M proper secretion. As to quaternary structure, interacts with isoform L. Interacts with the antigens of satellite virus HDV (HDVAgs); this interaction is required for encapsidation of HDV genomic RNA. Post-translationally, isoform M is N-terminally acetylated by host at a ratio of 90%, and N-glycosylated by host at the pre-S2 region. Myristoylated.

The protein resides in the virion membrane. The large envelope protein exists in two topological conformations, one which is termed 'external' or Le-HBsAg and the other 'internal' or Li-HBsAg. In its external conformation the protein attaches the virus to cell receptors and thereby initiating infection. This interaction determines the species specificity and liver tropism. This attachment induces virion internalization predominantly through caveolin-mediated endocytosis. The large envelope protein also assures fusion between virion membrane and endosomal membrane. In its internal conformation the protein plays a role in virion morphogenesis and mediates the contact with the nucleocapsid like a matrix protein. In terms of biological role, the middle envelope protein plays an important role in the budding of the virion. It is involved in the induction of budding in a nucleocapsid independent way. In this process the majority of envelope proteins bud to form subviral lipoprotein particles of 22 nm of diameter that do not contain a nucleocapsid. In Gorilla gorilla (western gorilla), this protein is Large envelope protein.